The following is a 231-amino-acid chain: Cytochrome c oxidase assembly factor 7A (231 aa).

5 Sel1-like repeats span residues 34–66, 68–104, 108–145, 146–182, and 183–218; these read PDGC…DQNE, SESF…NKGG, IDSC…DGNF, AASC…SLGH, and VWGC…DLHK.

This sequence belongs to the hcp beta-lactamase family.

The protein localises to the mitochondrion intermembrane space. May be required for assembly of mitochondrial respiratory chain complexes. The chain is Cytochrome c oxidase assembly factor 7A (coa7-a) from Xenopus laevis (African clawed frog).